Consider the following 323-residue polypeptide: Acetyl-coenzyme A carboxylase carboxyl transferase subunit alpha (323 aa).

In terms of domain architecture, CoA carboxyltransferase C-terminal spans 39–293 (RLAGKSQQLT…KRSLAESLRQ (255 aa)).

The protein belongs to the AccA family. Acetyl-CoA carboxylase is a heterohexamer composed of biotin carboxyl carrier protein (AccB), biotin carboxylase (AccC) and two subunits each of ACCase subunit alpha (AccA) and ACCase subunit beta (AccD).

It is found in the cytoplasm. The enzyme catalyses N(6)-carboxybiotinyl-L-lysyl-[protein] + acetyl-CoA = N(6)-biotinyl-L-lysyl-[protein] + malonyl-CoA. It functions in the pathway lipid metabolism; malonyl-CoA biosynthesis; malonyl-CoA from acetyl-CoA: step 1/1. In terms of biological role, component of the acetyl coenzyme A carboxylase (ACC) complex. First, biotin carboxylase catalyzes the carboxylation of biotin on its carrier protein (BCCP) and then the CO(2) group is transferred by the carboxyltransferase to acetyl-CoA to form malonyl-CoA. In Cupriavidus metallidurans (strain ATCC 43123 / DSM 2839 / NBRC 102507 / CH34) (Ralstonia metallidurans), this protein is Acetyl-coenzyme A carboxylase carboxyl transferase subunit alpha.